Here is a 321-residue protein sequence, read N- to C-terminus: GTP 3',8-cyclase (321 aa).

A Radical SAM core domain is found at Ser5–Glu233. Residue Arg14 participates in GTP binding. Cys21 and Cys25 together coordinate [4Fe-4S] cluster. Tyr27 provides a ligand contact to S-adenosyl-L-methionine. [4Fe-4S] cluster is bound at residue Cys28. Arg64 is a GTP binding site. An S-adenosyl-L-methionine-binding site is contributed by Gly68. Ser95 is a GTP binding site. Ser119 is a binding site for S-adenosyl-L-methionine. Lys155 is a GTP binding site. Met189 is a binding site for S-adenosyl-L-methionine. Cys249 and Cys252 together coordinate [4Fe-4S] cluster. Arg254–Arg256 serves as a coordination point for GTP. Position 266 (Cys266) interacts with [4Fe-4S] cluster.

This sequence belongs to the radical SAM superfamily. MoaA family. Monomer and homodimer. The cofactor is [4Fe-4S] cluster.

The catalysed reaction is GTP + AH2 + S-adenosyl-L-methionine = (8S)-3',8-cyclo-7,8-dihydroguanosine 5'-triphosphate + 5'-deoxyadenosine + L-methionine + A + H(+). It participates in cofactor biosynthesis; molybdopterin biosynthesis. Catalyzes the cyclization of GTP to (8S)-3',8-cyclo-7,8-dihydroguanosine 5'-triphosphate. This Helicobacter pylori (strain J99 / ATCC 700824) (Campylobacter pylori J99) protein is GTP 3',8-cyclase.